We begin with the raw amino-acid sequence, 176 residues long: Non-specific lipid transfer protein GPI-anchored 12 (176 aa).

The N-terminal stretch at 1–20 (MLTTNTLAVLLLLFLSLCSG) is a signal peptide. 4 disulfide bridges follow: Cys40–Cys83, Cys50–Cys67, Cys68–Cys110, and Cys81–Cys120. N-linked (GlcNAc...) asparagine glycosylation occurs at Asn46. Residue Asn149 is the site of GPI-anchor amidated asparagine attachment. Residues 150 to 176 (GAMTTKYCGVALNSLALLLLFTFLSLS) constitute a propeptide, removed in mature form.

Belongs to the plant LTP family. Preferentially expressed in the endodermis of hypocotyls and roots of seedlings, and in petals and anthers of inflorescences. May also be expressed in siliques, carpels and pedicels.

The protein resides in the cell membrane. Its function is as follows. Probable lipid transfer protein. The polypeptide is Non-specific lipid transfer protein GPI-anchored 12 (Arabidopsis thaliana (Mouse-ear cress)).